Reading from the N-terminus, the 411-residue chain is 3-phosphoshikimate 1-carboxyvinyltransferase (411 aa).

3-phosphoshikimate is bound by residues Lys-20, Ser-21, and Arg-25. Position 20 (Lys-20) interacts with phosphoenolpyruvate. The phosphoenolpyruvate site is built by Gly-86 and Arg-114. 3-phosphoshikimate is bound by residues Ser-156, Ser-157, Gln-158, Ser-181, Asp-295, and Lys-322. Residue Gln-158 participates in phosphoenolpyruvate binding. Asp-295 serves as the catalytic Proton acceptor. Phosphoenolpyruvate-binding residues include Arg-326, Arg-367, and Lys-393.

Belongs to the EPSP synthase family. In terms of assembly, monomer.

It is found in the cytoplasm. The enzyme catalyses 3-phosphoshikimate + phosphoenolpyruvate = 5-O-(1-carboxyvinyl)-3-phosphoshikimate + phosphate. It participates in metabolic intermediate biosynthesis; chorismate biosynthesis. Its function is as follows. Catalyzes the transfer of the enolpyruvyl moiety of phosphoenolpyruvate (PEP) to the 5-hydroxyl of shikimate-3-phosphate (S3P) to produce enolpyruvyl shikimate-3-phosphate and inorganic phosphate. The sequence is that of 3-phosphoshikimate 1-carboxyvinyltransferase from Picrophilus torridus (strain ATCC 700027 / DSM 9790 / JCM 10055 / NBRC 100828 / KAW 2/3).